Consider the following 92-residue polypeptide: Small ribosomal subunit protein uS19 (92 aa).

The protein belongs to the universal ribosomal protein uS19 family.

Functionally, protein S19 forms a complex with S13 that binds strongly to the 16S ribosomal RNA. The protein is Small ribosomal subunit protein uS19 of Staphylococcus carnosus (strain TM300).